Consider the following 287-residue polypeptide: ATP synthase gamma chain (287 aa).

The protein belongs to the ATPase gamma chain family. In terms of assembly, F-type ATPases have 2 components, CF(1) - the catalytic core - and CF(0) - the membrane proton channel. CF(1) has five subunits: alpha(3), beta(3), gamma(1), delta(1), epsilon(1). CF(0) has three main subunits: a, b and c.

Its subcellular location is the cell inner membrane. In terms of biological role, produces ATP from ADP in the presence of a proton gradient across the membrane. The gamma chain is believed to be important in regulating ATPase activity and the flow of protons through the CF(0) complex. The protein is ATP synthase gamma chain of Proteus mirabilis (strain HI4320).